Consider the following 172-residue polypeptide: Protein LOL2 (172 aa).

Putative zinc finger regions lie at residues 4-34, 44-74, and 82-112; these read QIVC…VSST, HLIC…VNLV, and HLNC…ITNT.

The protein resides in the nucleus. Its function is as follows. Putative zinc finger that may be involved in programmed cell death and defense response. This chain is Protein LOL2 (LOL2), found in Oryza sativa subsp. japonica (Rice).